We begin with the raw amino-acid sequence, 241 residues long: Glucosamine-6-phosphate deaminase (241 aa).

Asp67 functions as the Proton acceptor; for enolization step in the catalytic mechanism. Asn136 acts as the For ring-opening step in catalysis. His138 serves as the catalytic Proton acceptor; for ring-opening step. Catalysis depends on Glu143, which acts as the For ring-opening step.

It belongs to the glucosamine/galactosamine-6-phosphate isomerase family. NagB subfamily.

The enzyme catalyses alpha-D-glucosamine 6-phosphate + H2O = beta-D-fructose 6-phosphate + NH4(+). Its pathway is amino-sugar metabolism; N-acetylneuraminate degradation; D-fructose 6-phosphate from N-acetylneuraminate: step 5/5. Catalyzes the reversible isomerization-deamination of glucosamine 6-phosphate (GlcN6P) to form fructose 6-phosphate (Fru6P) and ammonium ion. The polypeptide is Glucosamine-6-phosphate deaminase (Bacillus pumilus (strain SAFR-032)).